We begin with the raw amino-acid sequence, 206 residues long: MGGKWSKSSIVGWSTVRERMRKTPPAADGVGAVSQDLDKHGAVTSSNTAFNNPDCAWLEAQEDEDVGFPVRPQVPLRPMTFKGAFDLGFFLKEKGGLDGLIYSKRRQEILDLWVYHTQGFFPDWQNYTPGPGIRYPLTFGWCYKLVPVDPREVEEATEGENNCLLHPVNQHGMEDEHREVLKWKFDSSLARKHVAREMHPEYYKDC.

The N-myristoyl glycine; by host moiety is linked to residue G2. S6 carries the post-translational modification Phosphoserine; by host. Positions 62–65 are acidic; interacts with host PACS1 and PACS2; stabilizes the interaction of NEF/MHC-I with host AP1M1; necessary for MHC-I internalization; that stretch reads EDED. An SH3-binding; interaction with Src family tyrosine kinases region spans residues 69 to 78; the sequence is PVRPQVPLRP. The PxxP; stabilizes the interaction of NEF/MHC-I with host AP1M1; necessary for MHC-I internalization signature appears at 72-75; sequence PQVP. The mediates dimerization, Nef-PTE1 interaction stretch occupies residues 108–124; that stretch reads EILDLWVYHTQGFFPDW. A binding to ATP6V1H region spans residues 148–180; the sequence is VDPREVEEATEGENNCLLHPVNQHGMEDEHREV. The Dileucine internalization motif; necessary for CD4 internalization signature appears at 164–165; the sequence is LL. The Diacidic; necessary for CD4 internalization signature appears at 174-175; it reads ED.

This sequence belongs to the lentivirus primate group Nef protein family. In terms of assembly, monomer; cytosolic form. Homodimer; membrane bound form. Interacts with Nef associated p21-activated kinase (PAK2); this interaction activates PAK2. Associates with the Nef-MHC-I-AP1 complex; this complex is required for MHC-I internalization. Interacts (via C-terminus) with host PI3-kinase. Interacts with host PACS1; this interaction seems to be weak. Interacts with host PACS2. Interacts with host LCK and MAPK3; these interactions inhibit the kinase activity of the latter. Interacts with host ATP6V1H; this interaction may play a role in CD4 endocytosis. Associates with the CD4-Nef-AP2 complex; this complex is required for CD4 internalization. Interacts with host AP2 subunit alpha and AP2 subunit sigma2. Interacts with TCR-zeta chain; this interaction up-regulates the Fas ligand (FasL) surface expression. Interacts with host HCK, LYN, and SRC; these interactions activate the Src family kinases. Interacts with MAP3K5; this interaction inhibits the Fas and TNFR-mediated death signals. Interacts with beta-COP and PTE1. Interacts with human RACK1; this increases Nef phosphorylation by PKC. Interacts with TP53; this interaction decreases the half-life of TP53, protecting the infected cell against p53-mediated apoptosis. The virion-associated Nef proteins are cleaved by the viral protease to release the soluble C-terminal core protein. Nef is probably cleaved concomitantly with viral structural proteins on maturation of virus particles. In terms of processing, myristoylated. Post-translationally, phosphorylated on serine residues, probably by host PKCdelta and theta.

The protein localises to the host cell membrane. It is found in the virion. Its subcellular location is the secreted. The protein resides in the host Golgi apparatus membrane. Its function is as follows. Factor of infectivity and pathogenicity, required for optimal virus replication. Alters numerous pathways of T-lymphocyte function and down-regulates immunity surface molecules in order to evade host defense and increase viral infectivity. Alters the functionality of other immunity cells, like dendritic cells, monocytes/macrophages and NK cells. In infected CD4(+) T-lymphocytes, down-regulates the surface MHC-I, mature MHC-II, CD4, CD28, CCR5 and CXCR4 molecules. Mediates internalization and degradation of host CD4 through the interaction of with the cytoplasmic tail of CD4, the recruitment of AP-2 (clathrin adapter protein complex 2), internalization through clathrin coated pits, and subsequent transport to endosomes and lysosomes for degradation. Diverts host MHC-I molecules to the trans-Golgi network-associated endosomal compartments by an endocytic pathway to finally target them for degradation. MHC-I down-regulation may involve AP-1 (clathrin adapter protein complex 1) or possibly Src family kinase-ZAP70/Syk-PI3K cascade recruited by PACS2. In consequence infected cells are masked for immune recognition by cytotoxic T-lymphocytes. Decreasing the number of immune receptors also prevents reinfection by more HIV particles (superinfection). Down-regulates host SERINC3 and SERINC5 thereby excluding these proteins from the viral particles. Virion infectivity is drastically higher when SERINC3 or SERINC5 are excluded from the viral envelope, because these host antiviral proteins impair the membrane fusion event necessary for subsequent virion penetration. In terms of biological role, bypasses host T-cell signaling by inducing a transcriptional program nearly identical to that of anti-CD3 cell activation. Interaction with TCR-zeta chain up-regulates the Fas ligand (FasL). Increasing surface FasL molecules and decreasing surface MHC-I molecules on infected CD4(+) cells send attacking cytotoxic CD8+ T-lymphocytes into apoptosis. Functionally, plays a role in optimizing the host cell environment for viral replication without causing cell death by apoptosis. Protects the infected cells from apoptosis in order to keep them alive until the next virus generation is ready to strike. Inhibits the Fas and TNFR-mediated death signals by blocking MAP3K5/ASK1. Decreases the half-life of TP53, protecting the infected cell against p53-mediated apoptosis. Inhibits the apoptotic signals regulated by the Bcl-2 family proteins through the formation of a Nef/PI3-kinase/PAK2 complex that leads to activation of PAK2 and induces phosphorylation of host BAD. Its function is as follows. Extracellular Nef protein targets CD4(+) T-lymphocytes for apoptosis by interacting with CXCR4 surface receptors. This is Protein Nef from Homo sapiens (Human).